The following is a 599-amino-acid chain: MTDLSHIRNFSIIAHIDHGKSTLADRFIQHCGGLSAREMEAQVLDSMDIERERGITIKAQSVTLSYTSKSGKVYQLNFIDTPGHVDFSYEVSRSLAACEGALLVVDAAQGVEAQSVANCYTALDQGLEVIPVLNKIDLPQAEPERVASEIEDIIGIDATDAVRCSAKSGLGIEDVLEVLIKSVPAPVGDIDAPLQALIIDSWFDNYLGVVSLVRVTQGCLKTKDKIILKSLGKPHVVDMVGVFTPKRKETGILKAGEVGFVVAGIKEILGAPVGDTITHASTSTVPQLPGFKKVKPQVYAGLFPVSSDDYENFRDALGKLTLNDASLFYEPESSEALGFGFRCGFLGMLHMEIIQERLEREYDLDLITTAPTVIYEVEKNDGSVVYVDNPSKLPDLGTIAEMREPIVEANMLMPQAYLGAVITLCIEKRGVQKDMQYLGGQVALKYELPMAEVVLDFFDKLKSVSRGFASLDYNFVRFEAAKLVRLDVLINSEKVDALALIVHRDTAQYKGRSLADKMKELIPRQMFDVAIQAAIGGQVVARTTVKALRKNVIAKCYGGDVSRKKKLLEKQKAGKKRMKQVGRVEIPQEAFLAVLKVDS.

The tr-type G domain maps to 5 to 187 (SHIRNFSIIA…VLIKSVPAPV (183 aa)). GTP is bound by residues 17 to 22 (DHGKST) and 134 to 137 (NKID).

Belongs to the TRAFAC class translation factor GTPase superfamily. Classic translation factor GTPase family. LepA subfamily.

It is found in the cell inner membrane. It carries out the reaction GTP + H2O = GDP + phosphate + H(+). Required for accurate and efficient protein synthesis under certain stress conditions. May act as a fidelity factor of the translation reaction, by catalyzing a one-codon backward translocation of tRNAs on improperly translocated ribosomes. Back-translocation proceeds from a post-translocation (POST) complex to a pre-translocation (PRE) complex, thus giving elongation factor G a second chance to translocate the tRNAs correctly. Binds to ribosomes in a GTP-dependent manner. The sequence is that of Elongation factor 4 from Saccharophagus degradans (strain 2-40 / ATCC 43961 / DSM 17024).